Reading from the N-terminus, the 449-residue chain is Heterogeneous nuclear ribonucleoprotein H (449 aa).

N-acetylmethionine is present on Met1. At Met2 the chain carries N-acetylmethionine; in Heterogeneous nuclear ribonucleoprotein H, N-terminally processed. The 80-residue stretch at 11–90 (FVVKVRGLPW…RYVEVFKSNN (80 aa)) folds into the RRM 1 domain. The residue at position 23 (Ser23) is a Phosphoserine. A Glycyl lysine isopeptide (Lys-Gly) (interchain with G-Cter in SUMO2) cross-link involves residue Lys35. Phosphoserine is present on residues Ser54 and Ser63. Glycyl lysine isopeptide (Lys-Gly) (interchain with G-Cter in SUMO2) cross-links involve residues Lys87 and Lys98. The RRM 2 domain maps to 111-188 (GFVRLRGLPF…RYIEIFKSSR (78 aa)). At Arg233 the chain carries Dimethylated arginine; alternate. Arg233 bears the Omega-N-methylarginine; alternate mark. The stretch at 234–249 (GAYGGGYGGYDDYNGY) is one 1-1 repeat. Positions 234 to 433 (GAYGGGYGGY…YGGQSSMSGY (200 aa)) are 2 X 16 AA Gly-rich approximate repeats. Position 246 is a phosphotyrosine (Tyr246). The RRM 3 domain occupies 289–364 (HCVHMRGLPY…RYVELFLNST (76 aa)). Ser310 is modified (phosphoserine). Repeat copies occupy residues 354–372 (HRYV…GGAY), 374–392 (HRYV…GGAY), and 418–433 (GGYG…MSGY). Positions 354–392 (HRYVELFLNSTAGASGGAYEHRYVELFLNSTAGASGGAY) are 2 X 19 AA perfect repeats.

Part of a ternary complex containing FUBP2, PTBP1, PTBP2 and HNRNPH1. Identified in the spliceosome C complex. Interacts with IGF2BP1. Interacts with CUGBP1; the interaction is RNA-dependent. Interacts with MBNL1; the interaction in RNA-independent.

The protein resides in the nucleus. The protein localises to the nucleoplasm. Functionally, this protein is a component of the heterogeneous nuclear ribonucleoprotein (hnRNP) complexes which provide the substrate for the processing events that pre-mRNAs undergo before becoming functional, translatable mRNAs in the cytoplasm. Mediates pre-mRNA alternative splicing regulation. Inhibits, together with CUGBP1, insulin receptor (IR) pre-mRNA exon 11 inclusion in myoblast. Binds to the IR RNA. Binds poly(RG). In Mus musculus (Mouse), this protein is Heterogeneous nuclear ribonucleoprotein H (Hnrnph1).